A 65-amino-acid chain; its full sequence is Weak toxin CM-10 (65 aa).

5 disulfides stabilise this stretch: Cys-3–Cys-24, Cys-6–Cys-11, Cys-17–Cys-42, Cys-46–Cys-57, and Cys-58–Cys-63.

This sequence belongs to the three-finger toxin family. Ancestral subfamily. Orphan group II sub-subfamily. Expressed by the venom gland.

It localises to the secreted. Its function is as follows. Binds with low affinity to muscular (alpha-1-beta-1-delta-epsilon/CHRNA1-CHRNB1-CHRND-CHRNE) and very low affinity to neuronal (alpha-7/CHRNA7) nicotinic acetylcholine receptor (nAChR). The chain is Weak toxin CM-10 from Naja nivea (Cape cobra).